We begin with the raw amino-acid sequence, 241 residues long: MFLNSLPTNFAALEVGQHLYWQIGNIRLHGQVFLTSWILLGALLVFISVGTKKMENDPKGLQNLLEFLWDYIRDLSRTQIGEKVYRDWMPFIGTLFLFVFVSNWGGALIPWRLIKLPSGELGAPTADINTTIALALLVSLSYFYAGLSNKGWRYFEYYVHPTPIMLPFKILEDFTKPLSLSFRLFGNILADELVVGVLVFLVPLVLPIPVMFLGLFTSAIQALIFATLAAYYIGEAVEEHH.

Transmembrane regions (helical) follow at residues 30-50 (GQVF…ISVG), 91-111 (FIGT…LIPW), 128-148 (INTT…AGLS), 193-213 (LVVG…VMFL), and 214-234 (GLFT…YYIG).

The protein belongs to the ATPase A chain family. In terms of assembly, F-type ATPases have 2 components, CF(1) - the catalytic core - and CF(0) - the membrane proton channel. CF(1) has five subunits: alpha(3), beta(3), gamma(1), delta(1), epsilon(1). CF(0) has four main subunits: a, b, b' and c.

It is found in the cellular thylakoid membrane. Functionally, key component of the proton channel; it plays a direct role in the translocation of protons across the membrane. This Prochlorococcus marinus subsp. pastoris (strain CCMP1986 / NIES-2087 / MED4) protein is ATP synthase subunit a.